Here is a 126-residue protein sequence, read N- to C-terminus: Alpha-1-purothionin (126 aa).

Residues 1–16 (CLLILGLVLEQLQVEG) form the signal peptide. 4 disulfides stabilise this stretch: C19/C55, C20/C47, C28/C45, and C32/C41. Positions 62 to 126 (LALESNSDEP…DAGLPSLDAY (65 aa)) are cleaved as a propeptide — acidic domain.

Belongs to the plant thionin (TC 1.C.44) family. 4 C-C subfamily.

It localises to the secreted. Its function is as follows. Thionins are small plant proteins which are toxic to animal cells. They seem to exert their toxic effect at the level of the cell membrane. Their precise function is not known. This is Alpha-1-purothionin (THI1.1) from Triticum aestivum (Wheat).